Reading from the N-terminus, the 115-residue chain is Large ribosomal subunit protein bL19 (115 aa).

This sequence belongs to the bacterial ribosomal protein bL19 family.

In terms of biological role, this protein is located at the 30S-50S ribosomal subunit interface and may play a role in the structure and function of the aminoacyl-tRNA binding site. The sequence is that of Large ribosomal subunit protein bL19 from Streptococcus pyogenes serotype M49 (strain NZ131).